We begin with the raw amino-acid sequence, 1099 residues long: MEILYTEITQDLTEGLLEIALEELEKNRKVYYIVPSSMSFEKEKEILERLAKGSDTAVFDLLVTRFKQLPYYFDKREKATMKTELGTVGLSMLFRRVLRSFKKDEIPLYFSLQDSAGFLEMLIQLRAELLTANLSVENLPDNPKNQELKKILAKFEAELSVEYANYSEFGDFTNRLVDGEFDQQLKDVTIIIDGYTRFSAEEELFIESIQEKVARFVVGTYSDENSLTAGSETIYVGTSQMITRFRNKFPVELRKIASSAVNEVYSKLTRILDLDSRFVITDEKIELKAEDEKYFRIWEAENQKVEIERVAKEIRQKIIQGAFFKDFTVLVGDPAAYEITLKEVFDLYEIPFFYAQEESMSQHPLVIFFESLFAIKKNNYRTDDVVNLLKSKVYTDANLDEEVIDYFEYYVQKYKISGRKKFTEEFIESEFSQIELVNEMREKLLGSESPLQVFLGNNRKKTGKKWVSDLQGLLENGNVMTNMNAYFSAAELQNEHQMADKHEQVWQMLISTLNEFLAVFSDEKLKSVEFLDILLAGLKNAKYRQIPANVDVVNVKDYELVEPKTNKYIYAIGLSQTNFPRIKKNSTLLSDEERLEINQTTDENQFIEQLNVANYQKNQFTVLSLINSAKESLVLSMPQIMANEQGEFSPVFQLFLKDADEKILQKIQGVNLFESLEHIGNSRSVIAMIGQIERELVESEETSEDKRVFWSSIFRILVKSNADFQKILLDLAKDIDTVNLAPDTLEQIYGDKIYASVSSFERFYNCEYQYFLENTLSLETFENIDINSKIVGNFFHEVFEKVMKETDLSAENFDEKLTLVLQEVDKNYSRYFTQDATARFTWSNLEEIVRQTATVLKATVSTDELKTLLTESSFGLPKSELGNFSVDDIYLRGRIDRLDQLSTDYLGAIDYKSSAHSFKLQEAYDGLSLQFMTYLDVIKQAFPNQKIWGALYLQFKNQPINLSEINQLSEIANILKESMRYEGLVLEDAAEQIKGIENIALKKTNIYNEEEFEQLLKLNEEHYRAAGQRLKKGKIAINPIMKRSEGIDQSGNVRGCRYCPLKSICRFEANIHMNEHSREIGQKSQAEILAELKGEERDE.

The [4Fe-4S] cluster site is built by Cys-766, Cys-1056, Cys-1059, and Cys-1065.

The protein belongs to the helicase family. AddB/RexB type 2 subfamily. As to quaternary structure, heterodimer of RexA (AddA) and RexB. Requires Mg(2+) as cofactor. [4Fe-4S] cluster serves as cofactor.

Functionally, the heterodimer acts both as an ATP-dependent DNA helicase and an ATP-dependent, dual-direction single-stranded exonuclease. Recognizes the L.lactis chi site (5'-GCGCGTG-3'), which stimulates homologous recombination. This subunit has 5'-&gt;3' exonuclease activity. Its function is as follows. The heterodimer acts as both an ATP-dependent DNA helicase and an ATP-dependent, dual-direction single-stranded exonuclease. Recognizes the chi site generating a DNA molecule suitable for the initiation of homologous recombination. This subunit has 5' -&gt; 3' nuclease activity but not helicase activity. The chain is Exonuclease/helicase subunit RexB from Lactococcus lactis subsp. cremoris (strain MG1363).